A 77-amino-acid polypeptide reads, in one-letter code: SS18-like protein 2 (77 aa).

The SH2-binding signature appears at 50-53 (YQHV).

It belongs to the SS18 family.

This chain is SS18-like protein 2 (Ss18l2), found in Mus musculus (Mouse).